The chain runs to 86 residues: Toxin Tpa4 (86 aa).

The signal sequence occupies residues 1–19 (MNYFVLIAVACLLTAGTES). One can recognise an LCN-type CS-alpha/beta domain in the interval 21–82 (KDGYPLEYDN…EPIKTSGRCR (62 aa)). Cystine bridges form between Cys31–Cys81, Cys35–Cys57, Cys43–Cys64, and Cys47–Cys66. At Pro83 the chain carries Proline amide.

It belongs to the long (4 C-C) scorpion toxin superfamily. Sodium channel inhibitor family. Alpha subfamily. As to expression, expressed by the venom gland.

The protein localises to the secreted. In terms of biological role, alpha toxins bind voltage-independently at site-3 of sodium channels (Nav) and inhibit the inactivation of the activated channels, thereby blocking neuronal transmission. This chain is Toxin Tpa4, found in Tityus pachyurus (Colombian scorpion).